The following is a 428-amino-acid chain: Enolase (428 aa).

Residue Gln-163 participates in (2R)-2-phosphoglycerate binding. Glu-205 (proton donor) is an active-site residue. The Mg(2+) site is built by Asp-242, Glu-286, and Asp-313. The (2R)-2-phosphoglycerate site is built by Lys-338, Arg-367, Ser-368, and Lys-389. Lys-338 (proton acceptor) is an active-site residue.

Belongs to the enolase family. Requires Mg(2+) as cofactor.

It localises to the cytoplasm. The protein resides in the secreted. Its subcellular location is the cell surface. It catalyses the reaction (2R)-2-phosphoglycerate = phosphoenolpyruvate + H2O. It participates in carbohydrate degradation; glycolysis; pyruvate from D-glyceraldehyde 3-phosphate: step 4/5. Its function is as follows. Catalyzes the reversible conversion of 2-phosphoglycerate (2-PG) into phosphoenolpyruvate (PEP). It is essential for the degradation of carbohydrates via glycolysis. The chain is Enolase from Lactobacillus helveticus (strain DPC 4571).